Reading from the N-terminus, the 275-residue chain is 4-deoxy-L-threo-5-hexosulose-uronate ketol-isomerase (275 aa).

Positions 193, 195, 200, and 242 each coordinate Zn(2+).

This sequence belongs to the KduI family. It depends on Zn(2+) as a cofactor.

The enzyme catalyses 5-dehydro-4-deoxy-D-glucuronate = 3-deoxy-D-glycero-2,5-hexodiulosonate. Its pathway is glycan metabolism; pectin degradation; 2-dehydro-3-deoxy-D-gluconate from pectin: step 4/5. In terms of biological role, catalyzes the isomerization of 5-dehydro-4-deoxy-D-glucuronate to 3-deoxy-D-glycero-2,5-hexodiulosonate. This chain is 4-deoxy-L-threo-5-hexosulose-uronate ketol-isomerase, found in Bacillus licheniformis (strain ATCC 14580 / DSM 13 / JCM 2505 / CCUG 7422 / NBRC 12200 / NCIMB 9375 / NCTC 10341 / NRRL NRS-1264 / Gibson 46).